A 66-amino-acid chain; its full sequence is Large ribosomal subunit protein bL35 (66 aa).

The span at 1 to 26 (MPKMKTHRGAAKRFKKTGTGKLKRGH) shows a compositional bias: basic residues. The segment at 1–48 (MPKMKTHRGAAKRFKKTGTGKLKRGHAYTSHLFANKTQKQKRKLRKAT) is disordered.

The protein belongs to the bacterial ribosomal protein bL35 family.

The sequence is that of Large ribosomal subunit protein bL35 from Geobacillus sp. (strain WCH70).